The primary structure comprises 227 residues: TMF-regulated nuclear protein 1 (227 aa).

2 disordered regions span residues 1–72 (MPGC…ELQR) and 200–227 (GRLRRGHGPEPDSPFRRSPPRGPASPQR). Pro residues predominate over residues 22-55 (SPPPPWDPMPSSQPPPPTPTLTPTPTPGQSPPLP).

As to quaternary structure, interacts with TMF1; may regulate TRNP1 proteasomal degradation. In terms of processing, ubiquitinated, leading to its degradation by the proteasome.

Its subcellular location is the nucleus. Its function is as follows. DNA-binding factor that regulates the expression of a subset of genes and plays a key role in tangential, radial, and lateral expansion of the brain neocortex. Regulates neural stem cells proliferation and the production of intermediate neural progenitors and basal radial glial cells affecting the process of cerebral cortex gyrification. May control the proliferation rate of cells by regulating their progression through key cell-cycle transition points. In Homo sapiens (Human), this protein is TMF-regulated nuclear protein 1 (TRNP1).